The primary structure comprises 491 residues: Carbohydrate ABC transporter substrate-binding protein (491 aa).

Zn(2+) contacts are provided by D212, H247, H252, and E256.

This sequence belongs to the bacterial solute-binding protein 1 family. Exists as a monomer, homodimer, homotrimer and homotetramer; oligomerization increases with higher protein concentration.

It localises to the cell surface. In terms of biological role, probably part of an ABC transporter complex involved in carbohydrate transport. This Streptococcus pneumoniae serotype 4 (strain ATCC BAA-334 / TIGR4) protein is Carbohydrate ABC transporter substrate-binding protein.